The following is a 329-amino-acid chain: Phosphate acetyltransferase (329 aa).

It belongs to the phosphate acetyltransferase and butyryltransferase family.

The protein resides in the cytoplasm. The catalysed reaction is acetyl-CoA + phosphate = acetyl phosphate + CoA. The protein operates within metabolic intermediate biosynthesis; acetyl-CoA biosynthesis; acetyl-CoA from acetate: step 2/2. This is Phosphate acetyltransferase (pta) from Staphylococcus epidermidis (strain ATCC 35984 / DSM 28319 / BCRC 17069 / CCUG 31568 / BM 3577 / RP62A).